Reading from the N-terminus, the 524-residue chain is Cytochrome P450 4F11 (524 aa).

A helical membrane pass occupies residues Ala15–Trp37. Residues Cys45 and Cys260 each carry the 4-hydroxynonenal-conjugated cysteine modification. His261 carries the post-translational modification 4-hydroxynonenal-conjugated histidine. A heme-binding site is contributed by Glu328. The residue at position 347 (His347) is a 4-hydroxynonenal-conjugated histidine. At Cys354 the chain carries 4-hydroxynonenal-conjugated cysteine. Residue Lys451 is modified to 4-hydroxynonenal-conjugated lysine. Cys468 contributes to the heme binding site.

The protein belongs to the cytochrome P450 family. Requires heme as cofactor. 4-hydroxynonenal conjugation impairs substrate binding and the long-chain fatty acid omega-monooxygenase activity. As to expression, expressed mainly in human liver, followed by kidney, heart, and skeletal muscle.

The protein resides in the endoplasmic reticulum membrane. The protein localises to the microsome membrane. It catalyses the reaction an organic molecule + reduced [NADPH--hemoprotein reductase] + O2 = an alcohol + oxidized [NADPH--hemoprotein reductase] + H2O + H(+). The catalysed reaction is an omega-methyl-long-chain fatty acid + reduced [NADPH--hemoprotein reductase] + O2 = an omega-hydroxy-long-chain fatty acid + oxidized [NADPH--hemoprotein reductase] + H2O + H(+). It carries out the reaction dodecanoate + reduced [NADPH--hemoprotein reductase] + O2 = 12-hydroxydodecanoate + oxidized [NADPH--hemoprotein reductase] + H2O + H(+). The enzyme catalyses hexadecanoate + reduced [NADPH--hemoprotein reductase] + O2 = 16-hydroxyhexadecanoate + oxidized [NADPH--hemoprotein reductase] + H2O + H(+). It catalyses the reaction (9Z)-octadecenoate + reduced [NADPH--hemoprotein reductase] + O2 = 18-hydroxy-(9Z)-octadecenoate + oxidized [NADPH--hemoprotein reductase] + H2O + H(+). The catalysed reaction is (5Z,8Z,11Z,14Z)-eicosatetraenoate + reduced [NADPH--hemoprotein reductase] + O2 = 20-hydroxy-(5Z,8Z,11Z,14Z)-eicosatetraenoate + oxidized [NADPH--hemoprotein reductase] + H2O + H(+). It carries out the reaction (4Z,7Z,10Z,13Z,16Z,19Z)-docosahexaenoate + reduced [NADPH--hemoprotein reductase] + O2 = 22-hydroxy-(4Z,7Z,10Z,13Z,16Z,19Z)-docosahexaenoate + oxidized [NADPH--hemoprotein reductase] + H2O + H(+). The enzyme catalyses 8-hydroxy-(5Z,9E,11Z,14Z)-eicosatetraenoate + reduced [NADPH--hemoprotein reductase] + O2 = 8,20-dihydroxy-(5Z,9E,11Z,14Z)-eicosatetraenoate + oxidized [NADPH--hemoprotein reductase] + H2O + H(+). It catalyses the reaction 3-hydroxyhexadecanoate + reduced [NADPH--hemoprotein reductase] + O2 = 3,16-dihydroxyhexadecanoate + oxidized [NADPH--hemoprotein reductase] + H2O + H(+). The catalysed reaction is 3-hydroxyoctadecanoate + reduced [NADPH--hemoprotein reductase] + O2 = 3,18-dihydroxyoctadecanoate + oxidized [NADPH--hemoprotein reductase] + H2O + H(+). It carries out the reaction phylloquinone + reduced [NADPH--hemoprotein reductase] + O2 = omega-hydroxyphylloquinone + oxidized [NADPH--hemoprotein reductase] + H2O + H(+). The enzyme catalyses menaquinone-4 + reduced [NADPH--hemoprotein reductase] + O2 = omega-hydroxymenaquinone-4 + oxidized [NADPH--hemoprotein reductase] + H2O + H(+). It catalyses the reaction 2-hexyl-5-pentylresorcinol + reduced [NADPH--hemoprotein reductase] + O2 = 2-hexyl-5-(5-hydroxypentyl)resorcinol + oxidized [NADPH--hemoprotein reductase] + H2O + H(+). The catalysed reaction is 2-hexyl-5-heptylresorcinol + reduced [NADPH--hemoprotein reductase] + O2 = 2-hexyl-5-(7-hydroxyheptyl)resorcinol + oxidized [NADPH--hemoprotein reductase] + H2O + H(+). It carries out the reaction 12-hydroxy-(5Z,8Z,10E,14Z)-eicosatetraenoate + reduced [NADPH--hemoprotein reductase] + O2 = 12,20-dihydroxy-(5Z,8Z,10E,14Z)-eicosatetraenoate + oxidized [NADPH--hemoprotein reductase] + H2O + H(+). The enzyme catalyses 15-hydroxy-(5Z,8Z,11Z,13E)-eicosatetraenoate + reduced [NADPH--hemoprotein reductase] + O2 = 15,20-dihydroxy-(5Z,8Z,11Z,13E)-eicosatetraenoate + oxidized [NADPH--hemoprotein reductase] + H2O + H(+). It functions in the pathway lipid metabolism; arachidonate metabolism. Its pathway is lipid metabolism; oxylipin biosynthesis. The protein operates within cofactor degradation; phylloquinone degradation. It participates in xenobiotic degradation. Inhibition of the long-chain fatty acid omega-monooxygenase activity by 4-hydroxynonenal (4-HNE) conjugation. In terms of biological role, a cytochrome P450 monooxygenase involved in the metabolism of various endogenous substrates, including fatty acids and their oxygenated derivatives (oxylipins). Mechanistically, uses molecular oxygen inserting one oxygen atom into a substrate, and reducing the second into a water molecule, with two electrons provided by NADPH via cytochrome P450 reductase (CPR; NADPH-ferrihemoprotein reductase). Catalyzes with high efficiency the oxidation of the terminal carbon (omega-oxidation) of 3-hydroxy fatty acids, such as 3-hydroxyhexadecanoic and 3-hydroxyoctadecanoic acids, likely participating in the biosynthesis of long-chain 3-hydroxydicarboxylic acids. Omega-hydroxylates and inactivates phylloquinone (vitamin K1), and menaquinone-4 (MK-4, a form of vitamin K2), both acting as cofactors in blood coagulation. Metabolizes with low efficiciency fatty acids, including (5Z,8Z,11Z,14Z)-eicosatetraenoic acid (arachidonate) and its oxygenated metabolite 8-hydroxyeicosatetraenoic acid (8-HETE). Catalyzes N- and O-demethylation of drugs such as erythromycin, benzphetamine, ethylmorphine, chlorpromazine, imipramine and verapamil. Catalyzes the oxidation of dialkylresorcinol 2. The polypeptide is Cytochrome P450 4F11 (Homo sapiens (Human)).